We begin with the raw amino-acid sequence, 305 residues long: N-acetylglucosamine-1-phosphotransferase subunit gamma (305 aa).

Residues 1 to 24 form the signal peptide; the sequence is MAAGLARLLLLLGLSAGGPAPAGA. The MRH domain maps to 69 to 171; that stretch reads GKCFSLVEST…TFETPLVCHP (103 aa). Cysteine 71 and cysteine 84 are joined by a disulfide. Asparagine 88 and asparagine 115 each carry an N-linked (GlcNAc...) asparagine glycan. 2 disulfides stabilise this stretch: cysteine 129-cysteine 157 and cysteine 142-cysteine 169. The DMAP1-binding domain maps to 176–279; the sequence is VYPTLPEALQ…YTRPTETSNL (104 aa). Positions 267–305 are disordered; that stretch reads GIPYTRPTETSNLEHLGHETPRAKSPEQLRGDPGLRGSL. The span at 281–296 shows a compositional bias: basic and acidic residues; sequence HLGHETPRAKSPEQLR.

In terms of assembly, homodimer; disulfide-linked. Hexamer of two alpha (GNPTAB), two beta (GNPTAB) and two gamma (GNPTG) subunits; disulfide-linked. The alpha and/or the beta subunits of the enzyme constitute the catalytic subunits. Post-translationally, cys-245 mediates the formation of the interchain disulfide bond for formation of the homodimer. Cys-142, Cys-157 and Cys-169 are involved in intramolecular disulfide bonds formation. As to expression, widely expressed.

The protein resides in the secreted. It localises to the golgi apparatus. In terms of biological role, non-catalytic subunit of the N-acetylglucosamine-1-phosphotransferase complex, an enzyme that catalyzes the formation of mannose 6-phosphate (M6P) markers on high mannose type oligosaccharides in the Golgi apparatus. Binds and presents the high mannose glycans of the acceptor to the catalytic alpha and beta subunits (GNPTAB). Enhances the rate of N-acetylglucosamine-1-phosphate transfer to the oligosaccharides of acid hydrolase acceptors. The polypeptide is N-acetylglucosamine-1-phosphotransferase subunit gamma (GNPTG) (Homo sapiens (Human)).